A 283-amino-acid polypeptide reads, in one-letter code: Formamidopyrimidine-DNA glycosylase (283 aa).

The active-site Schiff-base intermediate with DNA is Pro2. Glu3 (proton donor) is an active-site residue. Lys58 serves as the catalytic Proton donor; for beta-elimination activity. Positions 100, 119, and 162 each coordinate DNA. An FPG-type zinc finger spans residues 247 to 283 (RVYGREGLPCVTPGCSGTVGRIVQSGRSSFHCPLCQR). Arg273 acts as the Proton donor; for delta-elimination activity in catalysis.

Belongs to the FPG family. Monomer. Zn(2+) is required as a cofactor.

It carries out the reaction Hydrolysis of DNA containing ring-opened 7-methylguanine residues, releasing 2,6-diamino-4-hydroxy-5-(N-methyl)formamidopyrimidine.. The catalysed reaction is 2'-deoxyribonucleotide-(2'-deoxyribose 5'-phosphate)-2'-deoxyribonucleotide-DNA = a 3'-end 2'-deoxyribonucleotide-(2,3-dehydro-2,3-deoxyribose 5'-phosphate)-DNA + a 5'-end 5'-phospho-2'-deoxyribonucleoside-DNA + H(+). Functionally, involved in base excision repair of DNA damaged by oxidation or by mutagenic agents. Acts as a DNA glycosylase that recognizes and removes damaged bases. Has a preference for oxidized purines, such as 7,8-dihydro-8-oxoguanine (8-oxoG). Has AP (apurinic/apyrimidinic) lyase activity and introduces nicks in the DNA strand. Cleaves the DNA backbone by beta-delta elimination to generate a single-strand break at the site of the removed base with both 3'- and 5'-phosphates. This is Formamidopyrimidine-DNA glycosylase from Cereibacter sphaeroides (strain KD131 / KCTC 12085) (Rhodobacter sphaeroides).